Here is a 217-residue protein sequence, read N- to C-terminus: Sentrin-specific protease 8 (217 aa).

At Met-1 the chain carries N-acetylmethionine. The interval 11 to 174 is protease; the sequence is SLLRQSDVSL…MYVICNTEAL (164 aa). Active-site residues include His-102 and Asp-119. Residue Cys-163 is the Nucleophile of the active site.

This sequence belongs to the peptidase C48 family.

Its function is as follows. Protease that catalyzes two essential functions in the NEDD8 pathway: processing of full-length NEDD8 to its mature form and deconjugation of NEDD8 from targeted proteins such as cullins or p53. This is Sentrin-specific protease 8 (Senp8) from Rattus norvegicus (Rat).